We begin with the raw amino-acid sequence, 300 residues long: 1D-myo-inositol 2-acetamido-2-deoxy-alpha-D-glucopyranoside deacetylase (300 aa).

Zn(2+) contacts are provided by His13, Asp16, and His147.

Belongs to the MshB deacetylase family. Zn(2+) serves as cofactor.

It catalyses the reaction 1D-myo-inositol 2-acetamido-2-deoxy-alpha-D-glucopyranoside + H2O = 1D-myo-inositol 2-amino-2-deoxy-alpha-D-glucopyranoside + acetate. In terms of biological role, catalyzes the deacetylation of 1D-myo-inositol 2-acetamido-2-deoxy-alpha-D-glucopyranoside (GlcNAc-Ins) in the mycothiol biosynthesis pathway. The polypeptide is 1D-myo-inositol 2-acetamido-2-deoxy-alpha-D-glucopyranoside deacetylase (Mycolicibacterium paratuberculosis (strain ATCC BAA-968 / K-10) (Mycobacterium paratuberculosis)).